Here is a 156-residue protein sequence, read N- to C-terminus: CASP-like protein 5C1 (156 aa).

The Cytoplasmic segment spans residues 1–24; the sequence is MENRERAGAGAVGSAGSLGLRVEQ. The helical transmembrane segment at 25–45 threads the bilayer; it reads AVFSSASLLFMSVGVEFFSYT. A topological domain (extracellular) is located at residue Ala-46. A helical transmembrane segment spans residues 47–67; sequence FCFLVTIMGLVIPWSCTLAMI. Residues 68–81 are Cytoplasmic-facing; it reads DVYSILVGCPLRVP. Residues 82–102 traverse the membrane as a helical segment; that stretch reads GVMVIVVIGDWVLAILSLAAA. The Extracellular portion of the chain corresponds to 103 to 132; the sequence is SSSAAVIDLLLQFHGSHCSPRFCGRYQLSA. Residues 133 to 153 traverse the membrane as a helical segment; the sequence is MMAFLSWFLTAASSLFNLWFI. Residues 154–156 are Cytoplasmic-facing; it reads ASR.

The protein belongs to the Casparian strip membrane proteins (CASP) family. In terms of assembly, homodimer and heterodimers.

It is found in the cell membrane. This is CASP-like protein 5C1 from Oryza sativa subsp. indica (Rice).